We begin with the raw amino-acid sequence, 151 residues long: 3-hydroxyacyl-thioester dehydratase Z (151 aa).

The region spanning 11–131 is the MaoC-like domain; the sequence is AAAAGEKVGQ…TVQATVSTTV (121 aa). Substrate contacts are provided by residues 60–63, 86–89, 97–99, Gln124, and Arg148; these read IAHG, AINY, and PAP.

It belongs to the enoyl-CoA hydratase/isomerase family. In terms of assembly, homodimer.

The enzyme catalyses a (3R)-3-hydroxyacyl-CoA = a (2E)-enoyl-CoA + H2O. Shows trans-enoyl-CoA hydratase/3-hydroxyacyl-CoA dehydratase activity. The polypeptide is 3-hydroxyacyl-thioester dehydratase Z (Mycobacterium bovis (strain ATCC BAA-935 / AF2122/97)).